Consider the following 225-residue polypeptide: MTRAIRIAPSLLSADFAISRPRCPSDGRTGADILHFDVMDNHYVPNLTVGPLVCAALRPHTSLPIDVHLMTRPVDPLIDSFAEAGADMITFHPEASDHVHRSVQMIRKRGLKAGVALNPASPLSLLDHILEDLDLVLIMSVNPGFGGQSFIPSALPKIAALANGRRRACRGDRVDGGVNPADARALARPGADILVRLAIFGASDRAKAIASIRGAAESGLGQEAA.

Residue Ser-10 coordinates substrate. Positions 35, 37, and 68 each coordinate a divalent metal cation. Residue Asp-37 is the Proton acceptor of the active site. Substrate contacts are provided by residues His-68, 144–147, and 175–177; these read GFGG and DGG. Asp-175 is an a divalent metal cation binding site. The active-site Proton donor is the Asp-175.

This sequence belongs to the ribulose-phosphate 3-epimerase family. A divalent metal cation serves as cofactor.

It catalyses the reaction D-ribulose 5-phosphate = D-xylulose 5-phosphate. It participates in carbohydrate degradation. Catalyzes the reversible epimerization of D-ribulose 5-phosphate to D-xylulose 5-phosphate. The polypeptide is Ribulose-phosphate 3-epimerase (Rhodospirillum rubrum).